We begin with the raw amino-acid sequence, 736 residues long: MKKNFSRIVSIVAFSSLLGGMAFAQPAERGRNPQVRLLSAEQSMSKVQFRMDNLQFTGVQTSKGVAQVPTFTEGVNISEKGTPILPILSRSLAVSETRAMKVEVVSSKFIEKKDVLIAPSKGVISRAENPDQIPYVYGQSYNEDKFFPGEIATLSDPFILRDVRGQVVNFAPLQYNPVTKTLRIYTEIVVAVSETAEAGQNTISLVKNSTFTGFEDIYKSVFMNYEATRYTPVEEKENGRMIVIVPKKYEEDIEDFVDWKNQRGLRTEVKVAEDIASPVTANAIQQFVKQEYEKEGNDLTYVLLVGDHKDIPAKITPGIKSDQVYGQIVGNDHYNEVFIGRFSCESKEDLKTQIDRTIHYERNITTEDKWLGQALCIASAEGGPSADNGESDIQHENIIANLLTQYGYTKIIKCYDPGVTPKNIIDAFNGGISLANYTGHGSETAWGTSHFGTTHVKQLTNSNQLPFIFDVACVNGDFLYNVPCFAEALMRAQKDGKPTGTVAIIASTINQSWASPMRGQDEMNEILCEKHPNNIKRTFGGVTMNGMFAMVEKYKKDGEKMLDTWTVFGDPSLLVRTLVPTKMQVTAPANISASAQTFEVACDYNGAIATLSDDGDMVGTAIVKDGKAIIKLNESIADETNLTLTVVGYNKVTVIKDVKVEGTSIADVANDKPYTVAVSGKTITVESPAAGLTIFDMNGRRVATAKNRMVFEAQNGVYAVRIATEGKTYTEKVIVK.

An N-terminal signal peptide occupies residues 1 to 24 (MKKNFSRIVSIVAFSSLLGGMAFA). The propeptide occupies 25 to 229 (QPAERGRNPQ…SVFMNYEATR (205 aa)). Positions 307, 329, 332, 334, 336, 390, and 395 each coordinate Ca(2+). The Proton donor role is filled by H440. The active-site Nucleophile is the C473. The Ca(2+) site is built by F478, E487, D521, E522, E525, H531, D613, and E639.

The protein belongs to the peptidase C25 family.

It is found in the secreted. The catalysed reaction is Hydrolysis of proteins and small molecule substrates, with a preference for Arg in P1.. With respect to regulation, inhibited by human histatin-3 1/24 (histatin-5). Its function is as follows. Thiol protease. Acts synergistically with RgpA to catalyze the maturation of fimbrial subunits, such as FimA. Its proteolytic activity is a major factor in both periodontal tissue destruction and in evasion of host defense mechanisms. This Porphyromonas gingivalis (strain ATCC BAA-308 / W83) protein is Gingipain R2 (rgpB).